The primary structure comprises 120 residues: Ribosome-binding factor A (120 aa).

Belongs to the RbfA family. As to quaternary structure, monomer. Binds 30S ribosomal subunits, but not 50S ribosomal subunits or 70S ribosomes.

The protein localises to the cytoplasm. One of several proteins that assist in the late maturation steps of the functional core of the 30S ribosomal subunit. Associates with free 30S ribosomal subunits (but not with 30S subunits that are part of 70S ribosomes or polysomes). Required for efficient processing of 16S rRNA. May interact with the 5'-terminal helix region of 16S rRNA. The protein is Ribosome-binding factor A of Clostridium botulinum (strain 657 / Type Ba4).